A 279-amino-acid polypeptide reads, in one-letter code: Release factor glutamine methyltransferase (279 aa).

Residues 118–122, D141, and N182 each bind S-adenosyl-L-methionine; that span reads GTGSG. 182–185 serves as a coordination point for substrate; the sequence is NPPY.

The protein belongs to the protein N5-glutamine methyltransferase family. PrmC subfamily.

The enzyme catalyses L-glutaminyl-[peptide chain release factor] + S-adenosyl-L-methionine = N(5)-methyl-L-glutaminyl-[peptide chain release factor] + S-adenosyl-L-homocysteine + H(+). Its function is as follows. Methylates the class 1 translation termination release factors RF1/PrfA and RF2/PrfB on the glutamine residue of the universally conserved GGQ motif. The polypeptide is Release factor glutamine methyltransferase (Streptococcus pneumoniae (strain ATCC BAA-255 / R6)).